A 213-amino-acid polypeptide reads, in one-letter code: MRSGVIAQKVGMTRVYNDAGEHVPVTVLRMEGCQVVATRTVEKNGYTAVQLGAGQAKVKNTSKAMRGNFAIANVEPKAKLTEFRVSEDQLLEVGTEIKAGHFAAGQLVDVTGTTIGKGFAGAMKRHGFGGLRATHGVSVSHRSHGSTGSRQDPGKVFKNKKMAGHMGQTRVTTQNLEVVSTDEDRGLILIKGAVPGSKGAWIIVRDAVKSAAK.

The residue at position 151 (Q151) is an N5-methylglutamine.

It belongs to the universal ribosomal protein uL3 family. Part of the 50S ribosomal subunit. Forms a cluster with proteins L14 and L19. In terms of processing, methylated by PrmB.

One of the primary rRNA binding proteins, it binds directly near the 3'-end of the 23S rRNA, where it nucleates assembly of the 50S subunit. The sequence is that of Large ribosomal subunit protein uL3 from Rhizobium johnstonii (strain DSM 114642 / LMG 32736 / 3841) (Rhizobium leguminosarum bv. viciae).